The sequence spans 85 residues: Protein BTH_I0359 (85 aa).

The sequence is that of Protein BTH_I0359 from Burkholderia thailandensis (strain ATCC 700388 / DSM 13276 / CCUG 48851 / CIP 106301 / E264).